We begin with the raw amino-acid sequence, 134 residues long: MSWQAYVDDHLMCDIEGHEGHRLTAAAIVGHDGSVWAQSATFPQFKPEEMNGTMTDFNEPGHLAPTGLHLGGTKYMVIQGEAGAVIRGKKGSGGITIKKTGQALVFGIYEEPVTPGQCNMVVERLGDYLLEQGL.

A disulfide bond links Cys13 and Cys118. An Involved in PIP2 interaction motif is present at residues 84-100 (AVIRGKKGSGGITIKKT). Thr114 is modified (phosphothreonine).

Belongs to the profilin family. Occurs in many kinds of cells as a complex with monomeric actin in a 1:1 ratio. Phosphorylated by MAP kinases.

The protein resides in the cytoplasm. It localises to the cytoskeleton. Its function is as follows. Binds to actin and affects the structure of the cytoskeleton. At high concentrations, profilin prevents the polymerization of actin, whereas it enhances it at low concentrations. The polypeptide is Profilin-3 (Olea europaea (Common olive)).